We begin with the raw amino-acid sequence, 43 residues long: Protein PsbN (43 aa).

The chain crosses the membrane as a helical span at residues L7–P29.

It belongs to the PsbN family.

The protein localises to the cellular thylakoid membrane. Functionally, may play a role in photosystem I and II biogenesis. This chain is Protein PsbN, found in Thermosynechococcus vestitus (strain NIES-2133 / IAM M-273 / BP-1).